Here is a 460-residue protein sequence, read N- to C-terminus: uncharacterized protein (460 aa).

One can recognise a TRAM domain in the interval 5–63; the sequence is TWHQGELIEVAIADLSDTGDGVGRFAERVVFVPDTVPGDRVLVRLLHVKPNYAHGKLHQ. [4Fe-4S] cluster is bound by residues cysteine 76, cysteine 82, cysteine 85, and cysteine 164. S-adenosyl-L-methionine is bound by residues glutamine 288, tyrosine 317, glutamate 338, and aspartate 383. Cysteine 410 functions as the Nucleophile in the catalytic mechanism.

It belongs to the class I-like SAM-binding methyltransferase superfamily. RNA M5U methyltransferase family.

This is an uncharacterized protein from Nostoc sp. (strain PCC 7120 / SAG 25.82 / UTEX 2576).